Here is a 225-residue protein sequence, read N- to C-terminus: NAD(P)H-quinone oxidoreductase subunit K, chloroplastic (225 aa).

Residues C43, C44, C108, and C139 each contribute to the [4Fe-4S] cluster site.

It belongs to the complex I 20 kDa subunit family. As to quaternary structure, NDH is composed of at least 16 different subunits, 5 of which are encoded in the nucleus. Requires [4Fe-4S] cluster as cofactor.

The protein resides in the plastid. It is found in the chloroplast thylakoid membrane. The enzyme catalyses a plastoquinone + NADH + (n+1) H(+)(in) = a plastoquinol + NAD(+) + n H(+)(out). It catalyses the reaction a plastoquinone + NADPH + (n+1) H(+)(in) = a plastoquinol + NADP(+) + n H(+)(out). In terms of biological role, NDH shuttles electrons from NAD(P)H:plastoquinone, via FMN and iron-sulfur (Fe-S) centers, to quinones in the photosynthetic chain and possibly in a chloroplast respiratory chain. The immediate electron acceptor for the enzyme in this species is believed to be plastoquinone. Couples the redox reaction to proton translocation, and thus conserves the redox energy in a proton gradient. In Nymphaea alba (White water-lily), this protein is NAD(P)H-quinone oxidoreductase subunit K, chloroplastic.